A 283-amino-acid chain; its full sequence is Phosphatidylserine decarboxylase proenzyme (283 aa).

Catalysis depends on charge relay system; for autoendoproteolytic cleavage activity residues Asp-96, His-152, and Ser-250. Ser-250 functions as the Schiff-base intermediate with substrate; via pyruvic acid; for decarboxylase activity in the catalytic mechanism. Ser-250 is modified (pyruvic acid (Ser); by autocatalysis).

The protein belongs to the phosphatidylserine decarboxylase family. PSD-B subfamily. Prokaryotic type I sub-subfamily. In terms of assembly, heterodimer of a large membrane-associated beta subunit and a small pyruvoyl-containing alpha subunit. Requires pyruvate as cofactor. In terms of processing, is synthesized initially as an inactive proenzyme. Formation of the active enzyme involves a self-maturation process in which the active site pyruvoyl group is generated from an internal serine residue via an autocatalytic post-translational modification. Two non-identical subunits are generated from the proenzyme in this reaction, and the pyruvate is formed at the N-terminus of the alpha chain, which is derived from the carboxyl end of the proenzyme. The autoendoproteolytic cleavage occurs by a canonical serine protease mechanism, in which the side chain hydroxyl group of the serine supplies its oxygen atom to form the C-terminus of the beta chain, while the remainder of the serine residue undergoes an oxidative deamination to produce ammonia and the pyruvoyl prosthetic group on the alpha chain. During this reaction, the Ser that is part of the protease active site of the proenzyme becomes the pyruvoyl prosthetic group, which constitutes an essential element of the active site of the mature decarboxylase.

The protein localises to the cell membrane. The catalysed reaction is a 1,2-diacyl-sn-glycero-3-phospho-L-serine + H(+) = a 1,2-diacyl-sn-glycero-3-phosphoethanolamine + CO2. The protein operates within phospholipid metabolism; phosphatidylethanolamine biosynthesis; phosphatidylethanolamine from CDP-diacylglycerol: step 2/2. In terms of biological role, catalyzes the formation of phosphatidylethanolamine (PtdEtn) from phosphatidylserine (PtdSer). This chain is Phosphatidylserine decarboxylase proenzyme, found in Acinetobacter baumannii (strain AB0057).